We begin with the raw amino-acid sequence, 133 residues long: Peptide methionine sulfoxide reductase MsrB (133 aa).

Positions 1 to 12 are enriched in basic and acidic residues; it reads MSEKVQKSEHEW. Positions 1 to 36 are disordered; the sequence is MSEKVQKSEHEWQQQLTPEQYRVTREKGTERPFTGD. The region spanning 9 to 132 is the MsrB domain; that stretch reads EHEWQQQLTP…NSVSLDFHPG (124 aa). The Zn(2+) site is built by C48, C51, C97, and C100. C121 functions as the Nucleophile in the catalytic mechanism.

Belongs to the MsrB Met sulfoxide reductase family. Requires Zn(2+) as cofactor.

It catalyses the reaction L-methionyl-[protein] + [thioredoxin]-disulfide + H2O = L-methionyl-(R)-S-oxide-[protein] + [thioredoxin]-dithiol. The polypeptide is Peptide methionine sulfoxide reductase MsrB (Chromohalobacter salexigens (strain ATCC BAA-138 / DSM 3043 / CIP 106854 / NCIMB 13768 / 1H11)).